The sequence spans 328 residues: Lipoyl synthase (328 aa).

The [4Fe-4S] cluster site is built by Cys75, Cys80, Cys86, Cys101, Cys105, Cys108, and Ser315. Residues 87-304 enclose the Radical SAM core domain; sequence FNHGTATFMI…EREAKKMGYE (218 aa).

It belongs to the radical SAM superfamily. Lipoyl synthase family. [4Fe-4S] cluster serves as cofactor.

Its subcellular location is the cytoplasm. The enzyme catalyses [[Fe-S] cluster scaffold protein carrying a second [4Fe-4S](2+) cluster] + N(6)-octanoyl-L-lysyl-[protein] + 2 oxidized [2Fe-2S]-[ferredoxin] + 2 S-adenosyl-L-methionine + 4 H(+) = [[Fe-S] cluster scaffold protein] + N(6)-[(R)-dihydrolipoyl]-L-lysyl-[protein] + 4 Fe(3+) + 2 hydrogen sulfide + 2 5'-deoxyadenosine + 2 L-methionine + 2 reduced [2Fe-2S]-[ferredoxin]. The protein operates within protein modification; protein lipoylation via endogenous pathway; protein N(6)-(lipoyl)lysine from octanoyl-[acyl-carrier-protein]: step 2/2. Functionally, catalyzes the radical-mediated insertion of two sulfur atoms into the C-6 and C-8 positions of the octanoyl moiety bound to the lipoyl domains of lipoate-dependent enzymes, thereby converting the octanoylated domains into lipoylated derivatives. This is Lipoyl synthase from Colwellia psychrerythraea (strain 34H / ATCC BAA-681) (Vibrio psychroerythus).